Reading from the N-terminus, the 83-residue chain is Hepcidin (83 aa).

The first 23 residues, Met-1–Thr-23, serve as a signal peptide directing secretion. The propeptide occupies Thr-24 to Gln-53. 4 cysteine pairs are disulfide-bonded: Cys-65–Cys-81, Cys-68–Cys-71, Cys-69–Cys-77, and Cys-72–Cys-80.

Belongs to the hepcidin family. Interacts with SLC40A1; this interaction promotes SLC40A1 rapid ubiquitination. Highly expressed in the liver and to a much lesser extent in the heart. Secreted in blood.

The protein resides in the secreted. Functionally, liver-produced hormone that constitutes the main circulating regulator of iron absorption and distribution across tissues. Acts by promoting endocytosis and degradation of SLC40A1, leading to the retention of iron in iron-exporting cells and decreased flow of iron into plasma. Controls the major flows of iron into plasma: absorption of dietary iron in the intestine, recycling of iron by macrophages, which phagocytose old erythrocytes and other cells, and mobilization of stored iron from hepatocytes. The sequence is that of Hepcidin (Hamp) from Mus musculus (Mouse).